The sequence spans 399 residues: Dual-specificity RNA methyltransferase RlmN (399 aa).

Glu-120 serves as the catalytic Proton acceptor. One can recognise a Radical SAM core domain in the interval 126–367 (EEGRGTLCVS…SPVRTPRGRD (242 aa)). Cys-133 and Cys-372 are joined by a disulfide. Positions 140, 144, and 147 each coordinate [4Fe-4S] cluster. Residues 198–199 (GE), Ser-230, 252–254 (SLH), and Asn-329 each bind S-adenosyl-L-methionine. Cys-372 serves as the catalytic S-methylcysteine intermediate.

The protein belongs to the radical SAM superfamily. RlmN family. [4Fe-4S] cluster serves as cofactor.

It is found in the cytoplasm. The catalysed reaction is adenosine(2503) in 23S rRNA + 2 reduced [2Fe-2S]-[ferredoxin] + 2 S-adenosyl-L-methionine = 2-methyladenosine(2503) in 23S rRNA + 5'-deoxyadenosine + L-methionine + 2 oxidized [2Fe-2S]-[ferredoxin] + S-adenosyl-L-homocysteine. It catalyses the reaction adenosine(37) in tRNA + 2 reduced [2Fe-2S]-[ferredoxin] + 2 S-adenosyl-L-methionine = 2-methyladenosine(37) in tRNA + 5'-deoxyadenosine + L-methionine + 2 oxidized [2Fe-2S]-[ferredoxin] + S-adenosyl-L-homocysteine. Functionally, specifically methylates position 2 of adenine 2503 in 23S rRNA and position 2 of adenine 37 in tRNAs. m2A2503 modification seems to play a crucial role in the proofreading step occurring at the peptidyl transferase center and thus would serve to optimize ribosomal fidelity. In Parvibaculum lavamentivorans (strain DS-1 / DSM 13023 / NCIMB 13966), this protein is Dual-specificity RNA methyltransferase RlmN.